The chain runs to 350 residues: Methionine import ATP-binding protein MetN (350 aa).

One can recognise an ABC transporter domain in the interval 2-241 (IQIKNLKKEY…PQAPVTRSFV (240 aa)). 38–45 (GHSGAGKS) contacts ATP.

Belongs to the ABC transporter superfamily. Methionine importer (TC 3.A.1.24) family. As to quaternary structure, the complex is composed of two ATP-binding proteins (MetN), two transmembrane proteins (MetI) and a solute-binding protein (MetQ).

The protein localises to the cell inner membrane. It catalyses the reaction L-methionine(out) + ATP + H2O = L-methionine(in) + ADP + phosphate + H(+). It carries out the reaction D-methionine(out) + ATP + H2O = D-methionine(in) + ADP + phosphate + H(+). Part of the ABC transporter complex MetNIQ involved in methionine import. Responsible for energy coupling to the transport system. The protein is Methionine import ATP-binding protein MetN of Francisella tularensis subsp. tularensis (strain SCHU S4 / Schu 4).